A 555-amino-acid polypeptide reads, in one-letter code: Capsid vertex component 2 (555 aa).

The segment at 1-47 is interaction with major capsid protein/MCP; that stretch reads MAQCNLFYQYPITPILEGHVRNILICTEEDIRRLQSQSSLRLREKID.

This sequence belongs to the herpesviridae CVC2 protein family. Heterodimerizes with CVC1. Interacts with major capsid protein/MCP and triplex capsid protein 1/TRX1 at the pentamer vertices. Interacts with the large tegument protein/LTP.

It localises to the virion. The protein resides in the host nucleus. In terms of biological role, capsid vertex-specific component that plays a role during viral DNA encapsidation, assuring correct genome cleavage and presumably stabilizing capsids that contain full-length viral genomes. Participates in the interaction between the capsid and the tegument through interaction with the large tegument protein/LTP. In Homo sapiens (Human), this protein is Capsid vertex component 2.